The following is a 237-amino-acid chain: MTNELVYEGKAKRLFKTEEAGVLRVAYKDDATALNGVRKESFAGKGELNNQITSLIFSHLAEAGIESHFIRAISETEQLVKEVSIIPLEVVVRNVMAGSLAKRLGKEEGEPIPNAIVEFYFKEDALDDPFINDDHVLYLEIATTNEMDEIRQAARSINKVLQELFTQMNITLIDFKLEFGRDAAGNILLADEISPDTCRLWDKETNQKLDKDVFRRNIGNLTDVYTEVLNRLKQVQN.

It belongs to the SAICAR synthetase family.

The enzyme catalyses 5-amino-1-(5-phospho-D-ribosyl)imidazole-4-carboxylate + L-aspartate + ATP = (2S)-2-[5-amino-1-(5-phospho-beta-D-ribosyl)imidazole-4-carboxamido]succinate + ADP + phosphate + 2 H(+). Its pathway is purine metabolism; IMP biosynthesis via de novo pathway; 5-amino-1-(5-phospho-D-ribosyl)imidazole-4-carboxamide from 5-amino-1-(5-phospho-D-ribosyl)imidazole-4-carboxylate: step 1/2. The protein is Phosphoribosylaminoimidazole-succinocarboxamide synthase of Listeria monocytogenes serotype 4a (strain HCC23).